The chain runs to 493 residues: uncharacterized protein (493 aa).

Residues 10–30 form a helical membrane-spanning segment; sequence LVPSTRFALSLVMFFGCLVTY. 3 N-linked (GlcNAc...) asparagine glycosylation sites follow: Asn-35, Asn-47, and Asn-69. The next 6 helical transmembrane spans lie at 85–105, 112–132, 144–164, 175–195, 205–225, and 272–292; these read MVLSSFFYGYIGSQIIGGHLA, RVVFVTILGSALLTLLNPVAA, AAIGFLQGATFPAMHTMWSVW, GVTYAGAQIGNVIVLPLSGFL, PSIFYIIGVFGVLWTAVWWYV, and AVWACWAGHFAGDWGAYTMLV. Residue Asn-305 is glycosylated (N-linked (GlcNAc...) asparagine). Transmembrane regions (helical) follow at residues 311 to 331, 348 to 368, 375 to 395, and 406 to 426; these read AVASIPYIAYFLAINAGGVLA, AAMLVALIGQGIFLVASGYCG, VIIFITCGMAISGLQYAGFVV, and GTVMGTGNTISALAGIISPAV. Asn-433 carries an N-linked (GlcNAc...) asparagine glycan. A helical transmembrane segment spans residues 441–461; that stretch reads MVLWLTAGILTIGALLFSIFA.

This sequence belongs to the major facilitator superfamily. Sodium/anion cotransporter family.

It is found in the membrane. This is an uncharacterized protein from Caenorhabditis elegans.